The sequence spans 354 residues: MLSNLRILLNKAALRKAHTSMVRNFRYGKPVQSQVQLKGRDLLTLKNFTGEEIQYMLWLSADLKFRIKQKGEYLPLLQGKSLGMIFEKRSTRTRLSTETGFALLGGHPSFLTTQDIHLGVNESLTDTARVLSSMTDAVLARVYKQSDLDILAKEATIPIVNGLSDLYHPIQILADYLTLQEHYGSLKGLTLSWIGDGNNILHSIMMSAAKFGMHLQAATPKGYEPDPNIVKLAEQYAKENGTRLSMTNDPLEAARGGNVLITDTWISMGQEDEKKKRLQAFQGYQVTMKTAKVAASDWTFLHCLPRKPEEVDDEVFYSPRSLVFPEAENRKWTIMAVMVSLLTDYSPVLQKPKF.

A mitochondrion-targeting transit peptide spans 1–32; sequence MLSNLRILLNKAALRKAHTSMVRNFRYGKPVQ. Position 70 is an N6-acetyllysine; alternate (lysine 70). An N6-succinyllysine; alternate modification is found at lysine 70. Lysine 80 is subject to N6-succinyllysine. Lysine 88 carries the post-translational modification N6-acetyllysine; alternate. The residue at position 88 (lysine 88) is an N6-succinyllysine; alternate. 90 to 93 contributes to the carbamoyl phosphate binding site; it reads STRT. A Phosphoserine modification is found at serine 133. Arginine 141 is a binding site for carbamoyl phosphate. The residue at position 144 (lysine 144) is an N6-acetyllysine; alternate. Lysine 144 bears the N6-succinyllysine; alternate mark. 2 residues coordinate carbamoyl phosphate: histidine 168 and glutamine 171. An L-ornithine-binding site is contributed by asparagine 199. N6-acetyllysine; alternate occurs at positions 221, 231, and 238. Lysine 221, lysine 231, and lysine 238 each carry N6-succinyllysine; alternate. Positions 263, 267, and 268 each coordinate L-ornithine. N6-succinyllysine occurs at positions 274 and 289. Lysine 292 is modified (N6-acetyllysine; alternate). At lysine 292 the chain carries N6-succinyllysine; alternate. The active-site Proton acceptor is the cysteine 303. 303-304 contacts carbamoyl phosphate; that stretch reads CL. Lysine 307 bears the N6-acetyllysine; alternate mark. Residue lysine 307 is modified to N6-succinyllysine; alternate. Arginine 330 provides a ligand contact to carbamoyl phosphate.

It belongs to the aspartate/ornithine carbamoyltransferase superfamily. OTCase family. As to quaternary structure, homotrimer. In terms of processing, acetylation at Lys-88 negatively regulates ornithine carbamoyltransferase activity in response to nutrient signals.

The protein localises to the mitochondrion matrix. It carries out the reaction carbamoyl phosphate + L-ornithine = L-citrulline + phosphate + H(+). It functions in the pathway nitrogen metabolism; urea cycle; L-citrulline from L-ornithine and carbamoyl phosphate: step 1/1. With respect to regulation, negatively regulated by lysine acetylation. Functionally, catalyzes the second step of the urea cycle, the condensation of carbamoyl phosphate with L-ornithine to form L-citrulline. The urea cycle ensures the detoxification of ammonia by converting it to urea for excretion. The chain is Ornithine transcarbamylase, mitochondrial from Rattus norvegicus (Rat).